The sequence spans 711 residues: Hydroperoxide isomerase ALOXE3 (711 aa).

Positions 2–119 (AVYRLCVTTG…TVELRPGTAR (118 aa)) constitute a PLAT domain. Positions 119-711 (RTICQDALPL…PPLIENSVSI (593 aa)) constitute a Lipoxygenase domain. The Fe cation site is built by H408, H413, H588, N592, and I711.

Belongs to the lipoxygenase family. The cofactor is Fe cation.

It is found in the cytoplasm. It carries out the reaction a hydroperoxyeicosatetraenoate = a hydroxy-epoxy-eicosatetraenoate. The enzyme catalyses a hydroperoxyeicosatetraenoate = an oxoeicosatetraenoate + H2O. The catalysed reaction is (12R)-hydroperoxy-(5Z,8Z,10E,14Z)-eicosatetraenoate = (8R)-hydroxy-(11R,12R)-epoxy-(5Z,9E,14Z)-eicosatrienoate. It catalyses the reaction (12S)-hydroperoxy-(5Z,8Z,10E,14Z)-eicosatetraenoate = (8R)-hydroxy-(11S,12S)-epoxy-(5Z,9E,14Z)-eicosatrienoate. It carries out the reaction (12S)-hydroperoxy-(5Z,8Z,10E,14Z)-eicosatetraenoate = (10R)-hydroxy-(11S,12S)-epoxy-(5Z,8Z,14Z)-eicosatrienoate. The enzyme catalyses (15S)-hydroperoxy-(5Z,8Z,11Z,13E)-eicosatetraenoate = (13R)-hydroxy-(14S,15S)-epoxy-(5Z,8Z,11Z)-eicosatrienoate. The catalysed reaction is (5S)-hydroperoxy-(6E,8Z,11Z,14Z)-eicosatetraenoate = 7R-hydroxy-5S,6S-epoxy-(8Z,11Z,14Z)-eicosatrienoate. It catalyses the reaction (13S)-hydroperoxy-(9Z,11E)-octadecadienoate = 11-hydroxy-(12S,13S)-epoxy-(9Z)-octadecenoate. It carries out the reaction N-[omega-(9R)-hydroperoxy-(10E,12Z)-octadecadienoyloxy]acyl-beta-D-glucosyl-(1&lt;-&gt;1)-octadecasphing-4E-enine = a N-[omega-(9R,10R)-epoxy-(13R)-hydroxy-(11E)-octadecenoyloxy]acyl-beta-D-glucosyl-(1&lt;-&gt;1)-sphing-4E-enine. The enzyme catalyses a N-[omega-(9R)-hydroperoxy-(10E,12Z)-octadecadienoyloxy]-acylsphin-4E-enine = a N-[omega-(9R,10R)-epoxy-(13R)-hydroxy-(11E)-octadecenoyloxy]-acylsphing-4E-enine. The catalysed reaction is (12R)-hydroperoxy-(5Z,8Z,10E,14Z)-eicosatetraenoate = 12-oxo-(5Z,8Z,10E,14Z)-eicosatetraenoate + H2O. It catalyses the reaction (12S)-hydroperoxy-(5Z,8Z,10E,14Z)-eicosatetraenoate = 12-oxo-(5Z,8Z,10E,14Z)-eicosatetraenoate + H2O. It carries out the reaction (15S)-hydroperoxy-(5Z,8Z,11Z,13E)-eicosatetraenoate = 15-oxo-(5Z,8Z,11Z,13E)-eicosatetraenoate + H2O. The enzyme catalyses (13S)-hydroperoxy-(9Z,11E)-octadecadienoate = 13-oxo-(9Z,11E)-octadecadienoate + H2O. The catalysed reaction is (8S)-hydroperoxy-(5Z,9E,11Z,14Z)-eicosatetraenoate = (10R)-hydroxy-(8S,9S)-epoxy-(5Z,11Z,14Z)-eicosatrienoate. It catalyses the reaction (8R)-hydroperoxy-(5Z,9E,11Z,14Z)-eicosatetraenoate = 8-oxo-(5Z,9E,11Z,14Z)-eicosatetraenoate + H2O. It carries out the reaction (8S)-hydroperoxy-(5Z,9E,11Z,14Z)-eicosatetraenoate = 8-oxo-(5Z,9E,11Z,14Z)-eicosatetraenoate + H2O. It participates in lipid metabolism; hydroperoxy eicosatetraenoic acid biosynthesis. The protein operates within lipid metabolism; sphingolipid metabolism. Non-heme iron-containing lipoxygenase which is atypical in that it displays a prominent hydroperoxide isomerase activity and a reduced lipoxygenases activity. The hydroperoxide isomerase activity catalyzes the isomerization of hydroperoxides, derived from arachidonic and linoleic acid by ALOX12B, into hepoxilin-type epoxyalcohols and ketones. In presence of oxygen, oxygenates polyunsaturated fatty acids, including arachidonic acid, to produce fatty acid hydroperoxides. In the skin, acts downstream of ALOX12B on the linoleate moiety of esterified omega-hydroxyacyl-sphingosine (EOS) ceramides to produce an epoxy-ketone derivative, a crucial step in the conjugation of omega-hydroxyceramide to membrane proteins. Therefore plays a crucial role in the synthesis of corneocytes lipid envelope and the establishment of the skin barrier to water loss. In parallel, it may have a signaling function in barrier formation through the production of hepoxilins metabolites. Also plays a role in adipocyte differentiation through hepoxilin A3 and hepoxilin B3 production which in turn activate PPARG. Through the production of hepoxilins in the spinal cord, it may regulate inflammatory tactile allodynia. The polypeptide is Hydroperoxide isomerase ALOXE3 (Rattus norvegicus (Rat)).